The primary structure comprises 161 residues: Nucleotide-binding protein Bxeno_A3642 (161 aa).

It belongs to the YajQ family.

In terms of biological role, nucleotide-binding protein. This chain is Nucleotide-binding protein Bxeno_A3642, found in Paraburkholderia xenovorans (strain LB400).